Here is a 488-residue protein sequence, read N- to C-terminus: DNA polymerase II small subunit (488 aa).

Belongs to the DNA polymerase delta/II small subunit family. Heterodimer of a large subunit and a small subunit.

The catalysed reaction is DNA(n) + a 2'-deoxyribonucleoside 5'-triphosphate = DNA(n+1) + diphosphate. It carries out the reaction Exonucleolytic cleavage in the 3'- to 5'-direction to yield nucleoside 5'-phosphates.. Its function is as follows. Possesses two activities: a DNA synthesis (polymerase) and an exonucleolytic activity that degrades single-stranded DNA in the 3' to 5' direction. Has a template-primer preference which is characteristic of a replicative DNA polymerase. This chain is DNA polymerase II small subunit (polB), found in Thermoplasma acidophilum (strain ATCC 25905 / DSM 1728 / JCM 9062 / NBRC 15155 / AMRC-C165).